Here is a 498-residue protein sequence, read N- to C-terminus: Beta-amylase 5 (498 aa).

3 residues coordinate substrate: Asp-56, His-96, and Asp-104. Glu-189 functions as the Proton donor in the catalytic mechanism. Substrate contacts are provided by Lys-298, His-303, and Thr-345. The active-site Proton acceptor is the Glu-383. Substrate is bound by residues 384–385 and Arg-423; that span reads NA.

It belongs to the glycosyl hydrolase 14 family. In terms of tissue distribution, detected in phloem sieve elements.

The protein resides in the cytoplasm. The catalysed reaction is Hydrolysis of (1-&gt;4)-alpha-D-glucosidic linkages in polysaccharides so as to remove successive maltose units from the non-reducing ends of the chains.. Its function is as follows. Beta-amylase activity. Major cytosolic beta-amylase isoform in rosette leaves and inflorescences stems. The chain is Beta-amylase 5 (BAM5) from Arabidopsis thaliana (Mouse-ear cress).